The sequence spans 64 residues: Prokaryotic ubiquitin-like protein UBact (64 aa).

Basic and acidic residues-rich tracts occupy residues 1-12 (MSDLFRMEERRQ) and 33-64 (PDVKRPDTSDLLRRMKRVDPDAARRYRQRSGE). The interval 1–64 (MSDLFRMEER…ARRYRQRSGE (64 aa)) is disordered. E64 participates in a covalent cross-link: Isoglutamyl lysine isopeptide (Glu-Lys) (interchain with K-? in acceptor proteins).

It belongs to the ubiquitin-like protein UBact family.

Its function is as follows. May function as a protein modifier covalently attached to lysine residues of substrate proteins. This may serve to target the modified proteins for degradation by proteasomes. This chain is Prokaryotic ubiquitin-like protein UBact, found in Chthonomonas calidirosea (strain DSM 23976 / ICMP 18418 / T49).